The following is a 339-amino-acid chain: Dihydroorotate dehydrogenase (quinone) (339 aa).

FMN-binding positions include 62–66 (AGLDK) and threonine 86. Substrate is bound at residue lysine 66. 111–115 (NRMGF) provides a ligand contact to substrate. FMN contacts are provided by asparagine 139 and asparagine 172. Residue asparagine 172 participates in substrate binding. The Nucleophile role is filled by serine 175. Asparagine 177 contributes to the substrate binding site. Lysine 217 and threonine 245 together coordinate FMN. 246–247 (NT) contributes to the substrate binding site. FMN is bound by residues glycine 268, glycine 297, and 318–319 (YS).

This sequence belongs to the dihydroorotate dehydrogenase family. Type 2 subfamily. In terms of assembly, monomer. The cofactor is FMN.

The protein localises to the cell membrane. It catalyses the reaction (S)-dihydroorotate + a quinone = orotate + a quinol. It participates in pyrimidine metabolism; UMP biosynthesis via de novo pathway; orotate from (S)-dihydroorotate (quinone route): step 1/1. Catalyzes the conversion of dihydroorotate to orotate with quinone as electron acceptor. This chain is Dihydroorotate dehydrogenase (quinone), found in Shewanella frigidimarina (strain NCIMB 400).